A 235-amino-acid chain; its full sequence is Large ribosomal subunit protein uL1 (235 aa).

The protein belongs to the universal ribosomal protein uL1 family. Part of the 50S ribosomal subunit.

Its function is as follows. Binds directly to 23S rRNA. The L1 stalk is quite mobile in the ribosome, and is involved in E site tRNA release. Functionally, protein L1 is also a translational repressor protein, it controls the translation of the L11 operon by binding to its mRNA. The polypeptide is Large ribosomal subunit protein uL1 (Prochlorococcus marinus (strain MIT 9313)).